The sequence spans 159 residues: Putative ribosomal RNA large subunit methyltransferase H (159 aa).

Residues Leu-76, Gly-108, and 127–132 (FSKMTF) contribute to the S-adenosyl-L-methionine site.

This sequence belongs to the RNA methyltransferase RlmH family.

The protein resides in the cytoplasm. The enzyme catalyses pseudouridine(1915) in 23S rRNA + S-adenosyl-L-methionine = N(3)-methylpseudouridine(1915) in 23S rRNA + S-adenosyl-L-homocysteine + H(+). Functionally, specifically methylates the pseudouridine at position 1915 (m3Psi1915) in 23S rRNA. The polypeptide is Putative ribosomal RNA large subunit methyltransferase H (Methanococcus maripaludis (strain C7 / ATCC BAA-1331)).